A 528-amino-acid chain; its full sequence is Ulvan lyase, short isoform (528 aa).

Residues 1-29 (MKINLSMRELVSRLSTTLKTAIALSVLTA) form the signal peptide. Residue Cys30 is the site of N-palmitoyl cysteine attachment. Cys30 carries S-diacylglycerol cysteine lipidation. A substrate-binding site is contributed by 151 to 152 (SH). His152 acts as the Proton donor/acceptor in catalysis. Residues Asp218, Asp228, and Lys230 each coordinate Ca(2+). Residues Tyr309 and Arg326 each coordinate substrate. Residues Asn329, Asp332, and Phe334 each contribute to the Ca(2+) site. His390 contributes to the substrate binding site.

The protein belongs to the polysaccharide lyase 24 family.

It localises to the secreted. The protein localises to the cell membrane. Its function is as follows. Ulvan lyase involved in ulvan degradation. Ulvan is the main polysaccharide component of the Ulvales (green seaweed) cell wall. It is composed of disaccharide building blocks comprising 3-sulfated rhamnose (Rha3S) linked to D-glucuronic acid (GlcA), L-iduronic acid (IduA), or D-xylose (Xyl). Ulvan lyase catalyzes preferentially the endolytic cleavage of the glycosidic bond between Rha3S and the uronic acid GlcA, but not IduA, producing oligosaccharides that have unsaturated 4-deoxy-L-threo-hex-4-enopyranosiduronic acid (deltaUA) at the non-reducing end. The most abundant end products in the degradation of the ulvan polysaccharide were deltaUA-Rha3S disaccharides and deltaUA-Rha3S-IduA-Rha3S and deltaUA-Rha3S-Xyl-Rha3S tetrasaccharides. In Alteromonas sp. (strain LOR), this protein is Ulvan lyase, short isoform.